A 273-amino-acid chain; its full sequence is Phosphate import ATP-binding protein PstB (273 aa).

One can recognise an ABC transporter domain in the interval 26 to 268 (MRGEKVCVFY…PTEKRTQDYI (243 aa)). 58–65 (GPSGCGKS) provides a ligand contact to ATP.

It belongs to the ABC transporter superfamily. Phosphate importer (TC 3.A.1.7) family. In terms of assembly, the complex is composed of two ATP-binding proteins (PstB), two transmembrane proteins (PstC and PstA) and a solute-binding protein (PstS).

Its subcellular location is the cell inner membrane. The enzyme catalyses phosphate(out) + ATP + H2O = ADP + 2 phosphate(in) + H(+). In terms of biological role, part of the ABC transporter complex PstSACB involved in phosphate import. Responsible for energy coupling to the transport system. The protein is Phosphate import ATP-binding protein PstB of Brucella abortus (strain 2308).